Reading from the N-terminus, the 269-residue chain is Myelin protein zero-like protein 1 (269 aa).

The signal sequence occupies residues methionine 1–valine 35. The region spanning serine 36–glutamine 146 is the Ig-like V-type domain. At serine 36–valine 162 the chain is on the extracellular side. Asparagine 50 and asparagine 130 each carry an N-linked (GlcNAc...) asparagine glycan. A disulfide bridge links cysteine 58 with cysteine 135. Residues phenylalanine 163–isoleucine 183 traverse the membrane as a helical segment. Residues serine 184–asparagine 269 are Cytoplasmic-facing. Residues aspartate 199 to proline 238 are disordered. A compositionally biased stretch (polar residues) spans glycine 202–proline 211. Phosphoserine is present on residues serine 204, serine 206, serine 208, serine 210, serine 219, and serine 221. An ITIM motif 1 motif is present at residues valine 239 to leucine 244. At tyrosine 241 the chain carries Phosphotyrosine. Phosphoserine is present on serine 260. An ITIM motif 2 motif is present at residues valine 261–isoleucine 266. Residue tyrosine 263 is modified to Phosphotyrosine.

The protein belongs to the myelin P0 protein family. Interacts with phosphorylated PTPN11/SHP-2. Phosphorylated on tyrosine residues upon stimulation with pervanadate and concanavalin-A (ConA). Phosphorylation at Tyr-241 and Tyr-263 is required for interaction with PTPN11/SHP-2. Dephosphorylated by PTPN11/SHP-2 (in vitro). In terms of processing, N-glycosylated. N-glycosylation is required for concanavalin A binding. As to expression, widely expressed with highest levels in heart, placenta, kidney and pancreas. Isoform 3 is relatively abundant in hematopoietic tissues and fetal liver. Isoform 1 and isoform 3 are expressed in CD14- PB monocytes and pre-B cell progenitors. Isoform 3 appears to be the major isoform in CD34- promyelocytic and promonocytic cells. During differentiation in monocytic cells, the expression level of isoform 3 decreases and that of isoform 1 increases. Isoform 1 is prominent in stromal cells and, to a lesser extent, in umbilical vein endothelial cells and erythroid progenitors. Isoform 2 is expressed in a erythroid progenitor cell line.

It localises to the membrane. Cell surface receptor, which is involved in signal transduction processes. Recruits PTPN11/SHP-2 to the cell membrane and is a putative substrate of PTPN11/SHP-2. Is a major receptor for concanavalin-A (ConA) and is involved in cellular signaling induced by ConA, which probably includes Src family tyrosine-protein kinases. Isoform 3 seems to have a dominant negative role; it blocks tyrosine phosphorylation of MPZL1 induced by ConA. Isoform 1, but not isoform 2 and isoform 3, may be involved in regulation of integrin-mediated cell motility. The chain is Myelin protein zero-like protein 1 (MPZL1) from Homo sapiens (Human).